The following is an 82-amino-acid chain: RNA-binding protein Hfq (82 aa).

The Sm domain maps to 9 to 68; sequence DPFLNTLRKEHVPVSIYLVNGIKLQGKVDSFDQYVIMLKNTVSQMVYKHAISTIVPGRPV.

It belongs to the Hfq family. As to quaternary structure, homohexamer.

RNA chaperone that binds small regulatory RNA (sRNAs) and mRNAs to facilitate mRNA translational regulation in response to envelope stress, environmental stress and changes in metabolite concentrations. Also binds with high specificity to tRNAs. The sequence is that of RNA-binding protein Hfq from Methylococcus capsulatus (strain ATCC 33009 / NCIMB 11132 / Bath).